Reading from the N-terminus, the 903-residue chain is Translation initiation factor IF-2 (903 aa).

Residues 49–314 (LNREHGSGPD…GSSLQQGFNK (266 aa)) are disordered. Over residues 68–82 (STLNIQGTGGKSKSV) the composition is skewed to polar residues. Composition is skewed to basic and acidic residues over residues 93–163 (VKRD…EAAE) and 174–225 (EVSK…ENAT). The segment covering 265–279 (GRARPAKVARQKKSN) has biased composition (basic residues). The span at 280 to 293 (KHSESKADREEARA) shows a compositional bias: basic and acidic residues. In terms of domain architecture, tr-type G spans 402–571 (PRAPVVTIMG…LLQSEVLELK (170 aa)). The segment at 411-418 (GHVDHGKT) is G1. 411-418 (GHVDHGKT) lines the GTP pocket. The segment at 436–440 (GITQH) is G2. Residues 457–460 (DTPG) are G3. GTP contacts are provided by residues 457–461 (DTPGH) and 511–514 (NKID). Residues 511 to 514 (NKID) form a G4 region. The interval 547–549 (SAK) is G5.

This sequence belongs to the TRAFAC class translation factor GTPase superfamily. Classic translation factor GTPase family. IF-2 subfamily.

Its subcellular location is the cytoplasm. One of the essential components for the initiation of protein synthesis. Protects formylmethionyl-tRNA from spontaneous hydrolysis and promotes its binding to the 30S ribosomal subunits. Also involved in the hydrolysis of GTP during the formation of the 70S ribosomal complex. The sequence is that of Translation initiation factor IF-2 from Cronobacter sakazakii (strain ATCC BAA-894) (Enterobacter sakazakii).